We begin with the raw amino-acid sequence, 235 residues long: Small ribosomal subunit protein uS2c (235 aa).

Belongs to the universal ribosomal protein uS2 family.

The protein localises to the plastid. Its subcellular location is the chloroplast. This Cryptomeria japonica (Japanese cedar) protein is Small ribosomal subunit protein uS2c (rps2).